We begin with the raw amino-acid sequence, 276 residues long: MSMPLSNALQSQIITDAHFLHHPIVDSEFTRKLKYARMDSENIYLPPLTRGNNHNYDGKSVVEIRKLDISKEPWPFNYVTGACRESDGITTTGRMLYRNLKITSALDEIYGGICKKAHATTELAEGLRLNLFMKSPFDPVEDYTVHEITLGPGCNVPGYAGTTIGYISTLPASQAKRWTNEQPRIDIYIDQIMTVTGVANSSGFALAALLNANIELGNDPIIGIEAYPGTAEIHAKMGYKVIPGDENAPLKRMTLQPSSLPELFELKNGEWNYIGK.

It to E.coli YjfZ.

This is an uncharacterized protein from Escherichia coli (strain K12).